The primary structure comprises 51 residues: Sperm protamine P1 (51 aa).

2 disulfide bridges follow: Cys7-Cys15 and Cys38-Cys48.

It belongs to the protamine P1 family. Cross-linked by interchain disulfide bonds around the DNA-helix. Post-translationally, phosphorylated by SRPK1. In terms of tissue distribution, testis.

The protein localises to the nucleus. It localises to the chromosome. Functionally, protamines substitute for histones in the chromatin of sperm during the haploid phase of spermatogenesis. They compact sperm DNA into a highly condensed, stable and inactive complex. In Rattus norvegicus (Rat), this protein is Sperm protamine P1 (Prm1).